The primary structure comprises 71 residues: Large ribosomal subunit protein bL31 (71 aa).

It belongs to the bacterial ribosomal protein bL31 family. Type A subfamily. Part of the 50S ribosomal subunit.

Functionally, binds the 23S rRNA. The sequence is that of Large ribosomal subunit protein bL31 (rpmE) from Mycoplasmopsis synoviae (strain 53) (Mycoplasma synoviae).